The sequence spans 131 residues: Ribosome-binding factor A (131 aa).

The disordered stretch occupies residues 110–131; it reads QMNLGEDNEDNEDKENNDPGEE. The span at 115–131 shows a compositional bias: acidic residues; that stretch reads EDNEDNEDKENNDPGEE.

Belongs to the RbfA family. In terms of assembly, monomer. Binds 30S ribosomal subunits, but not 50S ribosomal subunits or 70S ribosomes.

The protein resides in the cytoplasm. Its function is as follows. One of several proteins that assist in the late maturation steps of the functional core of the 30S ribosomal subunit. Associates with free 30S ribosomal subunits (but not with 30S subunits that are part of 70S ribosomes or polysomes). Required for efficient processing of 16S rRNA. May interact with the 5'-terminal helix region of 16S rRNA. The protein is Ribosome-binding factor A of Natranaerobius thermophilus (strain ATCC BAA-1301 / DSM 18059 / JW/NM-WN-LF).